The chain runs to 614 residues: Vitamin B12 transporter BtuB (614 aa).

The N-terminal stretch at 1 to 20 (MIKKASLLTACSVTAFSAWA) is a signal peptide. The short motif at 26–33 (DTLVVTAN) is the TonB box element. The 115-residue stretch at 38-152 (PRSTVLAPTT…IGGVVNIITT (115 aa)) folds into the TBDR plug domain. Cyanocob(III)alamin contacts are provided by residues Leu-83, Ser-85, Asn-92, and 110-111 (VS). The 460-residue stretch at 155–614 (HPGTEISAGW…EYTLSGSYTF (460 aa)) folds into the TBDR beta-barrel domain. The next 3 membrane-spanning stretches (beta stranded) occupy residues 158–165 (TEISAGWG), 169–178 (YQNYDVSTQQ), and 184–195 (TRVTLLGDYAHT). Positions 199, 211, 213, and 215 each coordinate Ca(2+). Beta stranded transmembrane passes span 217–227 (FLSKTLYGALE) and 232–248 (DVWSGFVRGYGYDNRTN). 2 residues coordinate Ca(2+): Tyr-249 and Asp-250. Ala-251 lines the cyanocob(III)alamin pocket. Ca(2+) is bound at residue Asp-261. 14 beta stranded membrane passes run 263–277 (RKLYSQSWDAGLRYN), 279–296 (ELIKSQLITSYSHSKDYN), 309–325 (TLDEMKQYTVQWANNII), 328–337 (HGNIGAGVDW), 353–369 (YDQRNTGIYLTGLQQVG), 371–381 (FTFEGAGRSDD), 385–400 (FGRHGTWQTSAGWEFI), 403–417 (YRFIASYGTSYKAPN), 434–443 (KSKQWEGAFE), 449–458 (VNWRISGYRN), 473–490 (YYNEGKARIKGVEATANF), 494–509 (PLTHTVSYDYVDARNA), 517–529 (RRAKQQVKYQLDW), and 535–550 (DWGITYQYLGTRYDKD). Residue Thr-309 coordinates cyanocob(III)alamin. Arg-517 contributes to the cyanocob(III)alamin binding site. Tyr-551 provides a ligand contact to cyanocob(III)alamin. Transmembrane regions (beta stranded) follow at residues 558–572 (TVKMGGVSLWDLAVA), 585–596 (IANLFDKDYETV), and 602–614 (AGREYTLSGSYTF). Residues 597 to 614 (YGYQTAGREYTLSGSYTF) carry the TonB C-terminal box motif.

It belongs to the TonB-dependent receptor family. BtuB (TC 1.B.14.3.1) subfamily.

It localises to the cell outer membrane. Functionally, involved in the active translocation of vitamin B12 (cyanocobalamin) across the outer membrane to the periplasmic space. It derives its energy for transport by interacting with the trans-periplasmic membrane protein TonB. This chain is Vitamin B12 transporter BtuB, found in Escherichia coli O1:K1 / APEC.